The primary structure comprises 342 residues: UDP-3-O-acylglucosamine N-acyltransferase (342 aa).

H253 serves as the catalytic Proton acceptor.

The protein belongs to the transferase hexapeptide repeat family. LpxD subfamily. Homotrimer.

The catalysed reaction is a UDP-3-O-[(3R)-3-hydroxyacyl]-alpha-D-glucosamine + a (3R)-hydroxyacyl-[ACP] = a UDP-2-N,3-O-bis[(3R)-3-hydroxyacyl]-alpha-D-glucosamine + holo-[ACP] + H(+). It functions in the pathway bacterial outer membrane biogenesis; LPS lipid A biosynthesis. Catalyzes the N-acylation of UDP-3-O-acylglucosamine using 3-hydroxyacyl-ACP as the acyl donor. Is involved in the biosynthesis of lipid A, a phosphorylated glycolipid that anchors the lipopolysaccharide to the outer membrane of the cell. The chain is UDP-3-O-acylglucosamine N-acyltransferase from Rickettsia bellii (strain RML369-C).